A 445-amino-acid chain; its full sequence is MVLRKVVAILLAILPIFLFAVEPIKVVRSEKEIVVLTRFEEYHFDLEKGILKDFYTLVDGRKHVFTYGNDGFDVLDEGTPLTVIEEPIVTGVGKVSEGFSDEVSIVYNYGYVKKIFTIKNNENYTFFVDIESSKPVDVTVPRVSVDTSTDRYLENYFASFNPKTRTLVLLKHDEGLLFEGTLKVNGQKRFIVFMGPNKRTLIKKAFPEDYDVLIKALVNIPGFNKWYDSVFYGLVWFFWWLKDLTKNFGWAIMLFTLIVRLILYPLYHAQTKSLINMRKLQPQIEAIKKKYKDPTKQQEALLKLYREAGVNPASGCLMLLIQLPIFMLLWSVIRYYVEEFAYSGSFLIWKDLSAGGFSNNWLFLVITIVASYYTTLLTSQDARTAWQGIIMSVIFPFLFVGLPSGLFLYYATNTLIQLAVTYYTYKRYKIKGLTTRELLGLPKKA.

Transmembrane regions (helical) follow at residues 6–26 (VVAI…PIKV), 248–268 (FGWA…PLYH), 313–333 (ASGC…WSVI), 352–372 (LSAG…VASY), and 388–408 (GIIM…GLFL).

The protein belongs to the OXA1/ALB3/YidC family. Type 1 subfamily. Interacts with the Sec translocase complex via SecD. Specifically interacts with transmembrane segments of nascent integral membrane proteins during membrane integration.

The protein resides in the cell inner membrane. Required for the insertion and/or proper folding and/or complex formation of integral membrane proteins into the membrane. Involved in integration of membrane proteins that insert both dependently and independently of the Sec translocase complex, as well as at least some lipoproteins. Aids folding of multispanning membrane proteins. This is Membrane protein insertase YidC from Thermotoga maritima (strain ATCC 43589 / DSM 3109 / JCM 10099 / NBRC 100826 / MSB8).